A 312-amino-acid polypeptide reads, in one-letter code: uncharacterized protein (312 aa).

6 helical membrane-spanning segments follow: residues 9–29, 115–135, 187–207, 224–244, 264–284, and 292–312; these read LTLT…GLFI, LATL…IGFI, ITIA…DYIT, ITVA…AGEF, ILSS…IYGF, and MIST…TLIL.

The protein localises to the cell membrane. This is an uncharacterized protein from Methanocaldococcus jannaschii (strain ATCC 43067 / DSM 2661 / JAL-1 / JCM 10045 / NBRC 100440) (Methanococcus jannaschii).